The following is a 204-amino-acid chain: Late expression factor 2 (204 aa).

It belongs to the baculoviridae LEF-2 family.

In terms of biological role, required for late and very late gene expression. Specifically required for expression from the vp39 and polh promoters. In Orgyia pseudotsugata (Douglas-fir tussock moth), this protein is Late expression factor 2 (LEF-2).